Here is a 1007-residue protein sequence, read N- to C-terminus: Inversin-A (1007 aa).

ANK repeat units lie at residues 9 to 39, 43 to 72, 76 to 105, 109 to 140, 144 to 173, 177 to 209, 216 to 246, 250 to 279, 284 to 313, 317 to 346, 352 to 381, 385 to 414, 418 to 447, 451 to 480, 484 to 513, and 519 to 549; these read SLAS…VIDQ, LGRT…QVNH, SGRT…DCTH, RDIT…QVDA, RKQT…NIGI, EGKI…TESL, EGRT…NVAP, LFRT…SPNI, QGAT…VRDE, EGRT…ELEV, YGGT…QVDA, MKHT…KVHL, DGRS…NPDA, EGRT…DPNI, NGRT…FPNQ, and ERYT…SIAA. The short motif at 486-494 is the D-box 1 element; it reads RTALHWSCN. Residues 551 to 580 enclose the IQ 1 domain; it reads QDIAASKIQAVYKGHKVRRAFQERKNLLMK. Basic and acidic residues-rich tracts occupy residues 585–599 and 608–652; these read RKGA…ENRQ and GKQK…HQEE. Disordered stretches follow at residues 585–837 and 868–893; these read RKGA…KEFS and SAKS…SALK. Residues 684–701 show a composition bias toward polar residues; sequence IQSSPIEHVHTNSIQTRM. Over residues 702–712 the composition is skewed to low complexity; that stretch reads SPSRTSISHSS. Positions 727-745 are enriched in polar residues; sequence NPTQNNTQPRRTSRPQIES. Over residues 751-771 the composition is skewed to basic and acidic residues; sequence HRIEDLVQKESRRKSHREERK. Over residues 772 to 784 the composition is skewed to basic residues; that stretch reads GSHRQRASSHHRL. Residues 870–893 show a composition bias toward polar residues; the sequence is KSGQRPLTETQSPEKACQGSSALK. Residues 964–972 carry the D-box 2 motif; that stretch reads RKQLFQRKK. The region spanning 971–1000 is the IQ 2 domain; the sequence is KKHAATVIQKAWRTYCIRKSSRKTRHSHLR.

In terms of assembly, interacts with apc2. Binds calmodulin.

The protein resides in the cytoplasm. It is found in the cytoskeleton. In terms of biological role, required for normal renal development and establishment of left-right axis. Probably acts as a molecular switch between different Wnt signaling pathways. Inhibits the canonical Wnt pathway by targeting cytoplasmic disheveled for degradation by the ubiquitin-proteasome. This suggests that it is required in renal development to oppose the repression of terminal differentiation of tubular epithelial cells by Wnt signaling. Plays a central role in convergent extension movements in gastrulating embryos, a processus regulated by Wnt signaling. This is Inversin-A (invs-a) from Xenopus laevis (African clawed frog).